The following is a 231-amino-acid chain: Probable septum site-determining protein MinC (231 aa).

Positions 100–125 (EGKEKSPRPAPAPQAPAQNTTPVTKT) are disordered.

The protein belongs to the MinC family. Interacts with MinD and FtsZ.

Cell division inhibitor that blocks the formation of polar Z ring septums. Rapidly oscillates between the poles of the cell to destabilize FtsZ filaments that have formed before they mature into polar Z rings. Prevents FtsZ polymerization. This is Probable septum site-determining protein MinC from Escherichia coli O81 (strain ED1a).